The following is a 256-amino-acid chain: Acetyl-coenzyme A carboxylase carboxyl transferase subunit alpha (256 aa).

A CoA carboxyltransferase C-terminal domain is found at M1–S236.

This sequence belongs to the AccA family. As to quaternary structure, acetyl-CoA carboxylase is a heterohexamer composed of biotin carboxyl carrier protein (AccB), biotin carboxylase (AccC) and two subunits each of ACCase subunit alpha (AccA) and ACCase subunit beta (AccD).

Its subcellular location is the cytoplasm. It catalyses the reaction N(6)-carboxybiotinyl-L-lysyl-[protein] + acetyl-CoA = N(6)-biotinyl-L-lysyl-[protein] + malonyl-CoA. Its pathway is lipid metabolism; malonyl-CoA biosynthesis; malonyl-CoA from acetyl-CoA: step 1/1. In terms of biological role, component of the acetyl coenzyme A carboxylase (ACC) complex. First, biotin carboxylase catalyzes the carboxylation of biotin on its carrier protein (BCCP) and then the CO(2) group is transferred by the carboxyltransferase to acetyl-CoA to form malonyl-CoA. The polypeptide is Acetyl-coenzyme A carboxylase carboxyl transferase subunit alpha (Streptococcus pyogenes serotype M12 (strain MGAS2096)).